The chain runs to 418 residues: UDP-N-acetylglucosamine 1-carboxyvinyltransferase (418 aa).

23–24 is a phosphoenolpyruvate binding site; that stretch reads KN. Arg93 lines the UDP-N-acetyl-alpha-D-glucosamine pocket. Catalysis depends on Asp117, which acts as the Proton donor. UDP-N-acetyl-alpha-D-glucosamine-binding residues include Asp305 and Ile327.

The protein belongs to the EPSP synthase family. MurA subfamily.

Its subcellular location is the cytoplasm. It carries out the reaction phosphoenolpyruvate + UDP-N-acetyl-alpha-D-glucosamine = UDP-N-acetyl-3-O-(1-carboxyvinyl)-alpha-D-glucosamine + phosphate. The protein operates within cell wall biogenesis; peptidoglycan biosynthesis. Its function is as follows. Cell wall formation. Adds enolpyruvyl to UDP-N-acetylglucosamine. This Corynebacterium jeikeium (strain K411) protein is UDP-N-acetylglucosamine 1-carboxyvinyltransferase.